The primary structure comprises 268 residues: MNQEGASHSPSSTSTEPVRARWSPKPEQILILESIFNSGTVNPPKDETVRIRKMLEKFGAVGDANVFYWFQNRRSRSRRRHRQLLAATTAAATSIGAEDHQHMTAMSMHQYPCSNNEIDLGFGSCSNLSANYFLNGSSSSQIPSFFLGLSSSSGGCENNNGMENLFKMYGHESDHNHQQQHHSSNAASVLNPSDQNSNSQYEQEGFMTVFINGVPMEVTKGAIDMKTMFGDDSVLLHSSGLPLPTDEFGFLMHSLQHGQTYFLVPRQT.

Positions 1–16 (MNQEGASHSPSSTSTE) are enriched in polar residues. Disordered stretches follow at residues 1–22 (MNQE…RARW) and 173–198 (SDHN…QNSN). A DNA-binding region (homeobox; WUS-type) is located at residues 17–81 (PVRARWSPKP…NRRSRSRRRH (65 aa)).

It belongs to the WUS homeobox family.

The protein localises to the nucleus. Functionally, transcription factor which may be involved in developmental processes. The protein is WUSCHEL-related homeobox 12 (WOX12) of Arabidopsis thaliana (Mouse-ear cress).